The following is a 142-amino-acid chain: Large ribosomal subunit protein uL13 (142 aa).

This sequence belongs to the universal ribosomal protein uL13 family. Part of the 50S ribosomal subunit.

Functionally, this protein is one of the early assembly proteins of the 50S ribosomal subunit, although it is not seen to bind rRNA by itself. It is important during the early stages of 50S assembly. This chain is Large ribosomal subunit protein uL13, found in Ralstonia nicotianae (strain ATCC BAA-1114 / GMI1000) (Ralstonia solanacearum).